We begin with the raw amino-acid sequence, 255 residues long: Adenosylcobinamide-GDP ribazoletransferase (255 aa).

The next 6 membrane-spanning stretches (helical) occupy residues 24 to 44 (LIAYVPLVALFDAALAASLYV), 45 to 65 (AIYGISKLLASFISVSAIYIV), 98 to 118 (VGAGGVFTLIFVYLLALISLS), 122 to 142 (LYIGIFSIILAEFLSKSMMMI), 164 to 184 (KHDSLYTVEFVVIPIVLALLS), and 187 to 207 (SIMISVALAFLIFIIVKMAVI).

The protein belongs to the CobS family. The cofactor is Mg(2+).

The protein localises to the cell membrane. The enzyme catalyses alpha-ribazole + adenosylcob(III)inamide-GDP = adenosylcob(III)alamin + GMP + H(+). It carries out the reaction alpha-ribazole 5'-phosphate + adenosylcob(III)inamide-GDP = adenosylcob(III)alamin 5'-phosphate + GMP + H(+). It functions in the pathway cofactor biosynthesis; adenosylcobalamin biosynthesis; adenosylcobalamin from cob(II)yrinate a,c-diamide: step 7/7. Its function is as follows. Joins adenosylcobinamide-GDP and alpha-ribazole to generate adenosylcobalamin (Ado-cobalamin). Also synthesizes adenosylcobalamin 5'-phosphate from adenosylcobinamide-GDP and alpha-ribazole 5'-phosphate. This Thermoplasma acidophilum (strain ATCC 25905 / DSM 1728 / JCM 9062 / NBRC 15155 / AMRC-C165) protein is Adenosylcobinamide-GDP ribazoletransferase.